A 152-amino-acid chain; its full sequence is Deoxyuridine 5'-triphosphate nucleotidohydrolase (152 aa).

Residues 72 to 74 (RSG), Asn-85, and 89 to 91 (TVD) each bind substrate.

Belongs to the dUTPase family. Mg(2+) is required as a cofactor.

The enzyme catalyses dUTP + H2O = dUMP + diphosphate + H(+). It functions in the pathway pyrimidine metabolism; dUMP biosynthesis; dUMP from dCTP (dUTP route): step 2/2. Its function is as follows. This enzyme is involved in nucleotide metabolism: it produces dUMP, the immediate precursor of thymidine nucleotides and it decreases the intracellular concentration of dUTP so that uracil cannot be incorporated into DNA. The chain is Deoxyuridine 5'-triphosphate nucleotidohydrolase from Nitrobacter hamburgensis (strain DSM 10229 / NCIMB 13809 / X14).